We begin with the raw amino-acid sequence, 208 residues long: Large ribosomal subunit protein uL4 (208 aa).

A disordered region spans residues 50 to 83; it reads VKTRAEVSGGGRKPWKQKGTGRARQGSIRAPQWK.

It belongs to the universal ribosomal protein uL4 family. In terms of assembly, part of the 50S ribosomal subunit.

One of the primary rRNA binding proteins, this protein initially binds near the 5'-end of the 23S rRNA. It is important during the early stages of 50S assembly. It makes multiple contacts with different domains of the 23S rRNA in the assembled 50S subunit and ribosome. In terms of biological role, forms part of the polypeptide exit tunnel. This Mycoplasma capricolum subsp. capricolum (strain California kid / ATCC 27343 / NCTC 10154) protein is Large ribosomal subunit protein uL4.